Consider the following 793-residue polypeptide: DnaJ homolog subfamily C member 10 (793 aa).

The first 32 residues, 1–32 (MGVWLNRDEFIRDVKRISLCLLVLYVVIVVGT), serve as a signal peptide directing secretion. Residues 35–100 (NFYSLLGVSK…DLRKKYDKYG (66 aa)) form the J domain. Positions 130-232 (EIITLERREF…ESLVSFAMQH (103 aa)) constitute a Thioredoxin 1 domain. C158 and C161 form a disulfide bridge. Trxb stretches follow at residues 235 to 350 (TTVT…LPDF) and 348 to 463 (PDFE…PQNF). 3 consecutive Thioredoxin domains span residues 454–553 (HVTT…IEDL), 557–665 (SVVS…SWGL), and 671–776 (ASID…ALIY). A disulfide bond links C480 and C483. N530 is a glycosylation site (N-linked (GlcNAc...) asparagine). Disulfide bonds link C588/C591 and C700/C703. Residues 790–793 (KDEL) carry the Prevents secretion from ER motif.

Interacts with HSPA5 (via its J domain). Interacts with EDEM1.

The protein resides in the endoplasmic reticulum lumen. In terms of biological role, endoplasmic reticulum disulfide reductase involved both in the correct folding of proteins and degradation of misfolded proteins. Required for efficient folding of proteins in the endoplasmic reticulum by catalyzing the removal of non-native disulfide bonds formed during the folding of proteins, such as LDLR. Also involved in endoplasmic reticulum-associated degradation (ERAD) by reducing incorrect disulfide bonds in misfolded glycoproteins recognized by EDEM1. Interaction with HSPA5 is required its activity, not for the disulfide reductase activity, but to facilitate the release of DNAJC10 from its substrate. Promotes apoptotic signaling pathway in response to endoplasmic reticulum stress. The polypeptide is DnaJ homolog subfamily C member 10 (Dnajc10) (Rattus norvegicus (Rat)).